Consider the following 50-residue polypeptide: Sperm protamine P1 (50 aa).

This sequence belongs to the protamine P1 family. In terms of assembly, cross-linked by interchain disulfide bonds around the DNA-helix. Testis.

It localises to the nucleus. The protein resides in the chromosome. In terms of biological role, protamines substitute for histones in the chromatin of sperm during the haploid phase of spermatogenesis. They compact sperm DNA into a highly condensed, stable and inactive complex. This chain is Sperm protamine P1 (PRM1), found in Pan paniscus (Pygmy chimpanzee).